Here is a 609-residue protein sequence, read N- to C-terminus: Mitochondrial nucleoid-associated protein 1 (609 aa).

The Extracellular portion of the chain corresponds to 1 to 554 (MSDNPPRMEV…CNTTIRKSGF (554 aa)). Disordered stretches follow at residues 133–163 (QEET…GESR) and 406–425 (SPEG…QASH). The segment covering 146–161 (TSPKRELAEDLPKSGE) has biased composition (basic and acidic residues). A helical membrane pass occupies residues 555-571 (GGITMLSTGYFVLCCSW). Over 572–609 (SFRRLKKLCRPLPWKSTVPPSVGVAKTTGDCRSKTCLD) the chain is Cytoplasmic.

The protein localises to the mitochondrion inner membrane. It is found in the mitochondrion matrix. Its subcellular location is the mitochondrion nucleoid. Functionally, critical regulator of mitochondrial DNA (mtDNA) abundance. Binds dsDNA throughout the mitochondrial genome without sequence specificity and controls mtDNA copy number by promoting its replication. Also plays important roles in mitochondrial metabolism and cell proliferation. This Pongo abelii (Sumatran orangutan) protein is Mitochondrial nucleoid-associated protein 1.